A 330-amino-acid polypeptide reads, in one-letter code: Aspartate--ammonia ligase (330 aa).

This sequence belongs to the class-II aminoacyl-tRNA synthetase family. AsnA subfamily.

The protein localises to the cytoplasm. It carries out the reaction L-aspartate + NH4(+) + ATP = L-asparagine + AMP + diphosphate + H(+). It participates in amino-acid biosynthesis; L-asparagine biosynthesis; L-asparagine from L-aspartate (ammonia route): step 1/1. The protein is Aspartate--ammonia ligase of Haemophilus ducreyi (strain 35000HP / ATCC 700724).